The sequence spans 561 residues: Putative ABC transporter ATP-binding protein SAV_5847 (561 aa).

In terms of domain architecture, ABC transporter 1 spans 2-243 (IRFEDVSVTY…SPVYPPVVDL (242 aa)). Residue 36–43 (GPSGVGKS) participates in ATP binding. The segment at 268–299 (ERLAATETPTPTATATATAAPAPSPSRPRRPR) is disordered. A compositionally biased stretch (low complexity) spans 272–288 (ATETPTPTATATATAAP). Residues 315–543 (AAVEALAVRR…SPSFAPQVTK (229 aa)) form the ABC transporter 2 domain. An ATP-binding site is contributed by 347–354 (GRNGAGKS).

It belongs to the ABC transporter superfamily.

It is found in the cell membrane. Its function is as follows. Probably part of an ABC transporter complex. Responsible for energy coupling to the transport system. This is Putative ABC transporter ATP-binding protein SAV_5847 from Streptomyces avermitilis (strain ATCC 31267 / DSM 46492 / JCM 5070 / NBRC 14893 / NCIMB 12804 / NRRL 8165 / MA-4680).